A 680-amino-acid chain; its full sequence is MIDRYKHQQLRIGLVSPQQISAWANKTLPNGEIVGEVTKPYTFHYKTNKPEKDGLFCERIFGPIKSGICACGNYRVIGDKKEDSKFCEQCGVEFVDSRIRRYQMGYIKLACPVTHVWYLKRLPSYIANLLDKPLKELEGLVYCDFSFARPIAKKPTFLRLRGSFEYEIQSWKYSIPLFFTTQGFDTFRNREISTGAGAIREQLADLDLRLIIDYSLVEWKELGEEGPAGNEWEDRKVGRRKDFLVRRMELAKHFIRTNIEPEWMVLCLLPVLPPELRPIIQIDGGKLMSSDINELYRRVIYRNNTLIDLLTTSRSTPGELVMCQEKLVQEAVDTLLDNGIRGQPMRDGHNKVYKSFSDVIEGKEGRFRETLLGKRVDYSGRSVIVVGPSLSLHRCGLPREIAIELFQTFLIRGLIRQHFASNIGVAKSKIREKEPIVWEILQEVMQGHPVLLNRAPTLHRLGIQAFQPILVEGRAICLHPLVCKGFNADFDGDQMAVHVPLSLEAQAEARLLMFSHMNLLSSAIGDPISVPTQDMLIGLYVLTSGNRRGICANRYNPSNRKNHKNEKIYNNNYKYTKEPFFCNSYDAIGAYRQKRINLDSPLWLRWRLDQRVIASREAPIEVHYESLGTHHEIYGYYLIVKSIKKEILCIYIRTTVGHISLYREIEEAIQGFCRACSYGT.

The Zn(2+) site is built by cysteine 69, cysteine 71, cysteine 87, and cysteine 90. Aspartate 489, aspartate 491, and aspartate 493 together coordinate Mg(2+).

It belongs to the RNA polymerase beta' chain family. RpoC1 subfamily. In terms of assembly, in plastids the minimal PEP RNA polymerase catalytic core is composed of four subunits: alpha, beta, beta', and beta''. When a (nuclear-encoded) sigma factor is associated with the core the holoenzyme is formed, which can initiate transcription. Mg(2+) is required as a cofactor. The cofactor is Zn(2+).

The protein localises to the plastid. It is found in the chloroplast. The catalysed reaction is RNA(n) + a ribonucleoside 5'-triphosphate = RNA(n+1) + diphosphate. In terms of biological role, DNA-dependent RNA polymerase catalyzes the transcription of DNA into RNA using the four ribonucleoside triphosphates as substrates. This chain is DNA-directed RNA polymerase subunit beta', found in Cucumis sativus (Cucumber).